Consider the following 103-residue polypeptide: Cell division protein FtsB (103 aa).

Residues 1–3 are Cytoplasmic-facing; that stretch reads MGK. A helical membrane pass occupies residues 4 to 21; the sequence is LTLLLLALLVWLQYSLWF. Residues 22 to 103 are Periplasmic-facing; it reads GKNGIHDYSR…RAATAGQTHR (82 aa). A coiled-coil region spans residues 33 to 62; that stretch reads NDDVVAQQATNAKLKARNDQLFAEIDDLNG.

This sequence belongs to the FtsB family. As to quaternary structure, part of a complex composed of FtsB, FtsL and FtsQ.

The protein localises to the cell inner membrane. In terms of biological role, essential cell division protein. May link together the upstream cell division proteins, which are predominantly cytoplasmic, with the downstream cell division proteins, which are predominantly periplasmic. The protein is Cell division protein FtsB of Salmonella agona (strain SL483).